A 450-amino-acid chain; its full sequence is Gastrin/cholecystokinin type B receptor (450 aa).

Residues 1–57 (MELLKLNSSVQGPGPGSGSSLCHPGVSLLNSSSAGNLSCEPPRIRGTGTRELELAIR) lie on the Extracellular side of the membrane. N-linked (GlcNAc...) asparagine glycans are attached at residues N7, N30, and N36. A helical transmembrane segment spans residues 58-79 (ITLYAVIFLMSIGGNMLIIVVL). The Cytoplasmic segment spans residues 80–87 (GLSRRLRT). The chain crosses the membrane as a helical span at residues 88–109 (VTNAFLLSLAVSDLLLAVACMP). The Extracellular portion of the chain corresponds to 110 to 131 (FTLLPNLMGTFIFGTVICKAVS). An intrachain disulfide couples C127 to C205. Residues 132–150 (YLMGVSVSVSTLNLVAIAL) form a helical membrane-spanning segment. Residues 151 to 170 (ERYSAICRPLQARVWQTRSH) lie on the Cytoplasmic side of the membrane. The chain crosses the membrane as a helical span at residues 171-189 (AARVILATWLLSGLLMVPY). Residues 190-219 (PVYTVVQPVGPRVLQCMHRWPSARVRQTWS) are Extracellular-facing. Residues 220-242 (VLLLMLLFFIPGVVMAVAYGLIS) traverse the membrane as a helical segment. Residues 243–336 (RELYLGLRFD…KLLAKKRVVR (94 aa)) are Cytoplasmic-facing. The segment at 258-277 (DTQSRVRNQGGLPGGTAPGP) is disordered. The chain crosses the membrane as a helical span at residues 337-358 (MLLVIVLLFFLCWLPIYSANTW). The Extracellular segment spans residues 359–376 (CAFDGPGAHRALSGAPIS). A helical membrane pass occupies residues 377-397 (FIHLLSYASACVNPLVYCFMH). Over 398 to 450 (RRFRQACLDTCARCCPRPPRARPRPLPDEDPPTPSIASLSRLSYTTISTLGPG) the chain is Cytoplasmic. C411 carries the S-palmitoyl cysteine lipid modification.

It belongs to the G-protein coupled receptor 1 family. Stomach and brain.

The protein localises to the cell membrane. Its function is as follows. Receptor for gastrin and cholecystokinin. The CCK-B receptors occur throughout the central nervous system where they modulate anxiety, analgesia, arousal, and neuroleptic activity. This receptor mediates its action by association with G proteins that activate a phosphatidylinositol-calcium second messenger system. The chain is Gastrin/cholecystokinin type B receptor (CCKBR) from Mastomys natalensis (African soft-furred rat).